Reading from the N-terminus, the 507-residue chain is Arabinose import ATP-binding protein AraG (507 aa).

2 consecutive ABC transporter domains span residues 14-249 and 249-505; these read LRFN…MVGR and RDIQ…LPRT. An ATP-binding site is contributed by 46–53; it reads GENGAGKS.

The protein belongs to the ABC transporter superfamily. Arabinose importer (TC 3.A.1.2.2) family. In terms of assembly, the complex is composed of two ATP-binding proteins (AraG), two transmembrane proteins (AraH) and a solute-binding protein (AraF).

Its subcellular location is the cell inner membrane. It carries out the reaction L-arabinose(out) + ATP + H2O = L-arabinose(in) + ADP + phosphate + H(+). In terms of biological role, part of the ABC transporter complex AraFGH involved in arabinose import. Responsible for energy coupling to the transport system. The chain is Arabinose import ATP-binding protein AraG from Pseudomonas syringae pv. syringae (strain B728a).